Reading from the N-terminus, the 96-residue chain is MKSLHDVLKRPVITERTTDMMAEKKYVFEVPLKANKTEIKQAVEKVFGVKVEAVNTVRVPAKPKRYGKYSGYTSEWKKAIVKLTDDSKELAFYEGV.

Belongs to the universal ribosomal protein uL23 family. Part of the 50S ribosomal subunit. Contacts protein L29, and trigger factor when it is bound to the ribosome.

One of the early assembly proteins it binds 23S rRNA. One of the proteins that surrounds the polypeptide exit tunnel on the outside of the ribosome. Forms the main docking site for trigger factor binding to the ribosome. In Brevibacillus brevis (strain 47 / JCM 6285 / NBRC 100599), this protein is Large ribosomal subunit protein uL23.